Here is a 245-residue protein sequence, read N- to C-terminus: Folate receptor gamma (245 aa).

Residues 1-22 (MDMAWQMMQLLLLALVTAAGSA) form the signal peptide. Disulfide bonds link Cys-37-Cys-65, Cys-57-Cys-105, Cys-66-Cys-109, Cys-89-Cys-175, Cys-96-Cys-146, Cys-135-Cys-209, Cys-139-Cys-189, and Cys-152-Cys-169. Folate-binding residues include Asp-103 and Tyr-107. Asn-121 carries N-linked (GlcNAc...) asparagine glycosylation. Folate contacts are provided by residues 124-128 (WRKER), 157-162 (HKGWNW), and Ser-196. Asn-161 carries N-linked (GlcNAc...) asparagine glycosylation. Residue Asn-201 is glycosylated (N-linked (GlcNAc...) asparagine).

This sequence belongs to the folate receptor family. Spleen, thymus, bone marrow, ovarian carcinoma, and uterine carcinoma.

It is found in the secreted. Functionally, binds to folate and reduced folic acid derivatives and mediates delivery of 5-methyltetrahydrofolate to the interior of cells. Isoform Short does not bind folate. This Homo sapiens (Human) protein is Folate receptor gamma (FOLR3).